We begin with the raw amino-acid sequence, 718 residues long: Fatty acid oxidation complex subunit alpha (718 aa).

Positions 1–188 (MIYQGESIRV…KVGAVDAVVE (188 aa)) are enoyl-CoA hydratase/isomerase. A substrate-binding site is contributed by Asp295. A 3-hydroxyacyl-CoA dehydrogenase region spans residues 310 to 718 (TKEIKTAGVL…KSYFDTTSAK (409 aa)). Residues Met324, Asp343, 400–402 (VVE), Lys407, and Ser429 each bind NAD(+). His450 acts as the For 3-hydroxyacyl-CoA dehydrogenase activity in catalysis. Position 453 (Asn453) interacts with NAD(+). 2 residues coordinate substrate: Asn500 and Tyr658.

This sequence in the N-terminal section; belongs to the enoyl-CoA hydratase/isomerase family. It in the C-terminal section; belongs to the 3-hydroxyacyl-CoA dehydrogenase family. Heterotetramer of two alpha chains (FadB) and two beta chains (FadA).

The enzyme catalyses a (3S)-3-hydroxyacyl-CoA + NAD(+) = a 3-oxoacyl-CoA + NADH + H(+). It carries out the reaction a (3S)-3-hydroxyacyl-CoA = a (2E)-enoyl-CoA + H2O. It catalyses the reaction a 4-saturated-(3S)-3-hydroxyacyl-CoA = a (3E)-enoyl-CoA + H2O. The catalysed reaction is (3S)-3-hydroxybutanoyl-CoA = (3R)-3-hydroxybutanoyl-CoA. The enzyme catalyses a (3Z)-enoyl-CoA = a 4-saturated (2E)-enoyl-CoA. It carries out the reaction a (3E)-enoyl-CoA = a 4-saturated (2E)-enoyl-CoA. It participates in lipid metabolism; fatty acid beta-oxidation. Its function is as follows. Involved in the aerobic and anaerobic degradation of long-chain fatty acids via beta-oxidation cycle. Catalyzes the formation of 3-oxoacyl-CoA from enoyl-CoA via L-3-hydroxyacyl-CoA. It can also use D-3-hydroxyacyl-CoA and cis-3-enoyl-CoA as substrate. The sequence is that of Fatty acid oxidation complex subunit alpha from Idiomarina loihiensis (strain ATCC BAA-735 / DSM 15497 / L2-TR).